We begin with the raw amino-acid sequence, 322 residues long: Arginase-1 (322 aa).

The segment at 1–27 (MSSKPQSIGVIGAPFSKGQPRGGVEEG) is disordered. Residue S7 is modified to Phosphoserine. K17 carries the N6-succinyllysine modification. S62 is modified (phosphoserine). Residue K75 is modified to N6-succinyllysine. Residues H101, D124, H126, and D128 each contribute to the Mn(2+) site. Substrate contacts are provided by residues 126–130 (HTDIN), 137–139 (TGN), and D183. At S217 the chain carries Phosphoserine. 2 residues coordinate Mn(2+): D232 and D234. 2 residues coordinate substrate: T246 and E277.

It belongs to the arginase family. In terms of assembly, homotrimer. Interacts with CMTM6. Mn(2+) serves as cofactor.

Its subcellular location is the cytoplasm. The catalysed reaction is L-arginine + H2O = urea + L-ornithine. It participates in nitrogen metabolism; urea cycle; L-ornithine and urea from L-arginine: step 1/1. This chain is Arginase-1 (ARG1), found in Bos taurus (Bovine).